Here is a 196-residue protein sequence, read N- to C-terminus: Imidazoleglycerol-phosphate dehydratase (196 aa).

Belongs to the imidazoleglycerol-phosphate dehydratase family.

It localises to the cytoplasm. It catalyses the reaction D-erythro-1-(imidazol-4-yl)glycerol 3-phosphate = 3-(imidazol-4-yl)-2-oxopropyl phosphate + H2O. It participates in amino-acid biosynthesis; L-histidine biosynthesis; L-histidine from 5-phospho-alpha-D-ribose 1-diphosphate: step 6/9. This Clostridium botulinum (strain ATCC 19397 / Type A) protein is Imidazoleglycerol-phosphate dehydratase.